The primary structure comprises 528 residues: Phosphoenolpyruvate carboxykinase (ATP) (528 aa).

Substrate-binding residues include Arg56, Tyr192, and Lys198. Residues Lys198, His217, and 233–241 each bind ATP; that span reads GLSGTGKTT. 2 residues coordinate Mn(2+): Lys198 and His217. Asp254 is a binding site for Mn(2+). Residues Glu282, Arg319, and Thr444 each contribute to the ATP site. Substrate is bound at residue Arg319.

This sequence belongs to the phosphoenolpyruvate carboxykinase (ATP) family. Mn(2+) serves as cofactor.

It is found in the cytoplasm. It carries out the reaction oxaloacetate + ATP = phosphoenolpyruvate + ADP + CO2. It functions in the pathway carbohydrate biosynthesis; gluconeogenesis. Its function is as follows. Involved in the gluconeogenesis. Catalyzes the conversion of oxaloacetate (OAA) to phosphoenolpyruvate (PEP) through direct phosphoryl transfer between the nucleoside triphosphate and OAA. This is Phosphoenolpyruvate carboxykinase (ATP) from Lysinibacillus sphaericus (strain C3-41).